Reading from the N-terminus, the 77-residue chain is MAKQLCSYMFISMFILSAFLALPSAEGGATIKKCVVDVKLSKPCTFQECQPLCLQKYNGNGLCPGDDNNICACVYNC.

An N-terminal signal peptide occupies residues 1–27 (MAKQLCSYMFISMFILSAFLALPSAEG). 4 cysteine pairs are disulfide-bonded: cysteine 34–cysteine 77, cysteine 44–cysteine 63, cysteine 49–cysteine 71, and cysteine 53–cysteine 73.

Belongs to the DEFL family.

It localises to the secreted. The sequence is that of Putative defensin-like protein 162 (LCR37) from Arabidopsis thaliana (Mouse-ear cress).